A 588-amino-acid chain; its full sequence is MTDSTKQKGLEWQKQGLSDNERLKAESNFLRGTILDDLEDGLTGGFKGDNFQMIRFHGMYEQDDRDIRAERADEKLEARKFMLLRCRLPGGIIKPAQWIEIDKFARDNNYYQSIRLTNRQTFQYHGVPKTKLQEMHRLLHKLGLDSIATASDMNRNVLCSSNPVESELHQEAYEWAKKISEHLLPRTNGYLDVWIAGKKVQSSDSFLGQEDEPILGKTYLPRKYKTAVVLPPLNDVDMYGNDMNFVGIQDEAGKLVGFNVLVGGGLSFEHGNTKTYPNVALELGYIPVEQTLKAAECIVTTQRDFGNRADRKNARLRYTLQNMTLDGFREEVERRMGFKFESIRPFEFTERGDRIGWVKGIDDKWHLTCFIESGRITDKPGKPLMTGMLELAKVHTGDFRITANQNIIIANVAEEDKQRIEDIAREYGLIGNISKLRENSMSCVSFPTCPLAMAESERALPEFIDELDNIMAKHDVADDYIVTRITGCPNGCGRAMLAEIGLVGKAIGRYNLHLGGDRPGTRIPRMYKENITLPEILAELDGLIGRWAKERNSNEGFGDFVIRAGIIKPVVNAVVDFWDANLIPTVTA.

The [4Fe-4S] cluster site is built by C443, C449, C488, and C492. C492 is a binding site for siroheme.

The protein belongs to the nitrite and sulfite reductase 4Fe-4S domain family. Alpha(8)-beta(8). The alpha component is a flavoprotein, the beta component is a hemoprotein. Siroheme serves as cofactor. It depends on [4Fe-4S] cluster as a cofactor.

It catalyses the reaction hydrogen sulfide + 3 NADP(+) + 3 H2O = sulfite + 3 NADPH + 4 H(+). It functions in the pathway sulfur metabolism; hydrogen sulfide biosynthesis; hydrogen sulfide from sulfite (NADPH route): step 1/1. Component of the sulfite reductase complex that catalyzes the 6-electron reduction of sulfite to sulfide. This is one of several activities required for the biosynthesis of L-cysteine from sulfate. This is Sulfite reductase [NADPH] hemoprotein beta-component from Actinobacillus succinogenes (strain ATCC 55618 / DSM 22257 / CCUG 43843 / 130Z).